A 117-amino-acid chain; its full sequence is Large ribosomal subunit protein bL20 (117 aa).

The protein belongs to the bacterial ribosomal protein bL20 family.

Functionally, binds directly to 23S ribosomal RNA and is necessary for the in vitro assembly process of the 50S ribosomal subunit. It is not involved in the protein synthesizing functions of that subunit. This Oleidesulfovibrio alaskensis (strain ATCC BAA-1058 / DSM 17464 / G20) (Desulfovibrio alaskensis) protein is Large ribosomal subunit protein bL20.